Reading from the N-terminus, the 462-residue chain is beta-Tubulin at 65B (462 aa).

Residues Glu70, Ser137, Gly141, Thr142, Gly143, Asn203, and Asn225 each contribute to the GTP site. Glu70 contributes to the Mg(2+) binding site. The tract at residues 420–462 is disordered; that stretch reads DYRSSAEGEDSGGGGGGGGGRSGSAESGEEEATPEAHCQYCTE. Gly residues predominate over residues 430–441; it reads SGGGGGGGGGRS.

The protein belongs to the tubulin family. Dimer of alpha and beta chains. A typical microtubule is a hollow water-filled tube with an outer diameter of 25 nm and an inner diameter of 15 nM. Alpha-beta heterodimers associate head-to-tail to form protofilaments running lengthwise along the microtubule wall with the beta-tubulin subunit facing the microtubule plus end conferring a structural polarity. Microtubules usually have 13 protofilaments but different protofilament numbers can be found in some organisms and specialized cells. Mg(2+) serves as cofactor.

Its subcellular location is the cytoplasm. The protein localises to the cytoskeleton. Functionally, tubulin is the major constituent of microtubules, a cylinder consisting of laterally associated linear protofilaments composed of alpha- and beta-tubulin heterodimers. Microtubules grow by the addition of GTP-tubulin dimers to the microtubule end, where a stabilizing cap forms. Below the cap, tubulin dimers are in GDP-bound state, owing to GTPase activity of alpha-tubulin. This Drosophila melanogaster (Fruit fly) protein is beta-Tubulin at 65B.